The primary structure comprises 454 residues: MLDTEPDLSTRLFSHIDFTHGAVAAVSGGSDSTALLLLLKHHFDRTGSSAKLLAVTIDHGLRQGSAAEAQAVAKLCAERGIAHRTLTWTGRKPSTGLPAAARDARYHLLAEAARAEGIGLIVTGHTADDQAETVLMRHARDRELADLAGRGLAGMAPATLYDWREWIVRPLLGTRRSALRDFLRREHVGWAEDPTNIDEAFERPRVRAALAGESAGHMENTLRLAGQAAVERGQLGASAANLIRRIASQPSTGLIRLDPALLIADDQAAIYALRILLATAGGAAFLPDQARSAALFVRLKAGFLCATLSRTVVDFRHAGLFLRREARGLPPAATAVDNTIWDGRRHITLNDMSGALLIAPLGAAAARRLAIDDGETPASLIRAALAAEPTLLQAFENLGLPQGEPRLPVFAARPVVSPFARFLPSFDLAPARAVAELIGASPLPASPLGGHSAD.

27 to 32 (SGGSDS) contacts ATP.

This sequence belongs to the tRNA(Ile)-lysidine synthase family.

The protein resides in the cytoplasm. It carries out the reaction cytidine(34) in tRNA(Ile2) + L-lysine + ATP = lysidine(34) in tRNA(Ile2) + AMP + diphosphate + H(+). Functionally, ligates lysine onto the cytidine present at position 34 of the AUA codon-specific tRNA(Ile) that contains the anticodon CAU, in an ATP-dependent manner. Cytidine is converted to lysidine, thus changing the amino acid specificity of the tRNA from methionine to isoleucine. In Mesorhizobium japonicum (strain LMG 29417 / CECT 9101 / MAFF 303099) (Mesorhizobium loti (strain MAFF 303099)), this protein is tRNA(Ile)-lysidine synthase.